Reading from the N-terminus, the 88-residue chain is Putative regulatory protein DvMF_1139 (88 aa).

Belongs to the RemA family.

In Nitratidesulfovibrio vulgaris (strain DSM 19637 / Miyazaki F) (Desulfovibrio vulgaris), this protein is Putative regulatory protein DvMF_1139.